The following is a 171-amino-acid chain: Adenine phosphoribosyltransferase (171 aa).

Belongs to the purine/pyrimidine phosphoribosyltransferase family. Homodimer.

The protein localises to the cytoplasm. It carries out the reaction AMP + diphosphate = 5-phospho-alpha-D-ribose 1-diphosphate + adenine. It functions in the pathway purine metabolism; AMP biosynthesis via salvage pathway; AMP from adenine: step 1/1. In terms of biological role, catalyzes a salvage reaction resulting in the formation of AMP, that is energically less costly than de novo synthesis. The polypeptide is Adenine phosphoribosyltransferase (Mycoplasmopsis fermentans (strain ATCC 19989 / NBRC 14854 / NCTC 10117 / PG18) (Mycoplasma fermentans)).